A 566-amino-acid chain; its full sequence is Arginine--tRNA ligase (566 aa).

The short motif at 121 to 131 (ANPNGPFHIGH) is the 'HIGH' region element.

It belongs to the class-I aminoacyl-tRNA synthetase family.

Its subcellular location is the cytoplasm. The enzyme catalyses tRNA(Arg) + L-arginine + ATP = L-arginyl-tRNA(Arg) + AMP + diphosphate. The polypeptide is Arginine--tRNA ligase (Methanococcus maripaludis (strain DSM 14266 / JCM 13030 / NBRC 101832 / S2 / LL)).